Reading from the N-terminus, the 933-residue chain is MYIKVKLMSNALEKINNFFKEKSWIKVFLIILMLMFVSFQLRAQTADMKFAQDNEFLKDMFSDEHGRMYLLALDPYYYLRLSENLYNNGHCGDTIKVVDGKETPYDLYQYAPPGHPLPWEPPVICLATLAIYYIWHSIDLTVTIMNAAFWVPAVLGMLLGIPIYFVVRRVTNSNIGGIAGAIALISAPGLLYKTCAGFADTPIFEVLPILFIVWFILESIHSQEKTALFKKDLKNPISLFVIAALIIELIIGAYLNIASGESVVIASILFYTVSLAFILAGLIIAGIKKLKGNELEFELFALLAVILTAVSPKMWGAWWYGFDVITAFLVIYIIALALLKSQVKIKEFINIGNLKNIVYLSIFYIFGSFVLLVAIYGMGIAISPITSPLGYNQILSTYTQTTGWPNVYTTVAELAKPSSWSEIFTNAIGSDTIAIVGILGILLSFLSLRYEKVKLDIKYSILLAIWLAVTLYAATKGIRFAALATPPLAIGLGIFVGQLERFLKMKSDIAIFGIGIPAGIFGLLILSKYSAKISQILLPTTYVPIIAYGFLIVLALLAIYKISDIISTLNDKKETIIKVSTLLLCIGVVIPPLSAVVPFSVAPTFNNGWKEGLDWIKANTPNNSVITCWWDNGHIYTYEARRMVTFDGGSQNSPRAYWVGRAFATSNENLSIGIIRMLATSGDEAFKKGSVLMNFTHNNVSKTVKILNEILPVDRSKAYDILTKKYGLSDKKAKLVLNATHPEHPNPDYLITYNRMTDIAPVWSMFGFWNFSLPPNTPNDKREKGAFFKGTAYYLGNGTILANVNVYTYSYVTLINSTNISTAIVQKINGQAKIIGTFKIHKLYIKTPLGVKELVLNKDGQLSEFIRIEADGRGYAWLATRNLEDSIYAKLHFLDGYGLKHIKLVKATIDPTDFGIQPGFKIYKVDYGTDYLK.

The Cytoplasmic portion of the chain corresponds to 1–22; it reads MYIKVKLMSNALEKINNFFKEK. A helical membrane pass occupies residues 23-43; sequence SWIKVFLIILMLMFVSFQLRA. Topologically, residues 44-146 are extracellular; it reads QTADMKFAQD…SIDLTVTIMN (103 aa). The DXD motif 1 motif lies at 72–74; that stretch reads ALD. Position 74 (aspartate 74) interacts with Mn(2+). Residues 147–167 form a helical membrane-spanning segment; that stretch reads AAFWVPAVLGMLLGIPIYFVV. Over 168–174 the chain is Cytoplasmic; sequence RRVTNSN. Residues 175 to 195 form a helical membrane-spanning segment; that stretch reads IGGIAGAIALISAPGLLYKTC. Position 196 (alanine 196) is a topological domain, extracellular. A helical transmembrane segment spans residues 197-217; that stretch reads GFADTPIFEVLPILFIVWFIL. Aspartate 200 lines the Mn(2+) pocket. The DXD motif 2 signature appears at 200-202; the sequence is DTP. At 218–236 the chain is on the cytoplasmic side; it reads ESIHSQEKTALFKKDLKNP. The helical transmembrane segment at 237-257 threads the bilayer; that stretch reads ISLFVIAALIIELIIGAYLNI. Topologically, residues 258–263 are extracellular; sequence ASGESV. Residues 264–284 traverse the membrane as a helical segment; the sequence is VIASILFYTVSLAFILAGLII. The Cytoplasmic portion of the chain corresponds to 285-296; the sequence is AGIKKLKGNELE. Residues 297–317 form a helical membrane-spanning segment; it reads FELFALLAVILTAVSPKMWGA. Tryptophan 318 is a topological domain (extracellular). The chain crosses the membrane as a helical span at residues 319 to 339; that stretch reads WYGFDVITAFLVIYIIALALL. Over 340 to 361 the chain is Cytoplasmic; sequence KSQVKIKEFINIGNLKNIVYLS. Residues 362-382 form a helical membrane-spanning segment; the sequence is IFYIFGSFVLLVAIYGMGIAI. At 383 to 427 the chain is on the extracellular side; sequence SPITSPLGYNQILSTYTQTTGWPNVYTTVAELAKPSSWSEIFTNA. Residues 410-413 carry the TIXE motif motif; sequence TVAE. Glutamate 413 contributes to the Mn(2+) binding site. The helical transmembrane segment at 428–448 threads the bilayer; it reads IGSDTIAIVGILGILLSFLSL. Topologically, residues 449–454 are cytoplasmic; that stretch reads RYEKVK. The helical transmembrane segment at 455–475 threads the bilayer; that stretch reads LDIKYSILLAIWLAVTLYAAT. Over 476-479 the chain is Extracellular; it reads KGIR. Arginine 479 contacts a glycophospholipid. Residues 480–500 traverse the membrane as a helical segment; sequence FAALATPPLAIGLGIFVGQLE. Topologically, residues 501 to 581 are cytoplasmic; sequence RFLKMKSDIA…KKETIIKVST (81 aa). A helical transmembrane segment spans residues 582-602; that stretch reads LLLCIGVVIPPLSAVVPFSVA. At 603-933 the chain is on the extracellular side; the sequence is PTFNNGWKEG…KVDYGTDYLK (331 aa). Positions 629-631 are interacts with target acceptor peptide in protein substrate; it reads WWD. Positions 629–633 match the WWDYG motif motif; it reads WWDNG. Residues 756 to 763 carry the MI motif motif; the sequence is MTDIAPVW.

The protein belongs to the STT3 family. Mn(2+) is required as a cofactor. Requires Mg(2+) as cofactor.

It localises to the cell membrane. It catalyses the reaction an archaeal dolichyl phosphooligosaccharide + [protein]-L-asparagine = an archaeal dolichyl phosphate + a glycoprotein with the oligosaccharide chain attached by N-beta-D-glycosyl linkage to a protein L-asparagine.. Its pathway is cell surface structure biogenesis; S-layer biogenesis. The protein operates within protein modification; protein glycosylation. In terms of biological role, oligosaccharyl transferase (OST) that catalyzes the initial transfer of a defined glycan (ManNAcGlc-2,3-diNAcAGlcNAc in Methanococci) from the lipid carrier dolichol-monophosphate to an asparagine residue within an Asn-X-Ser/Thr consensus motif in nascent polypeptide chains, the first step in protein N-glycosylation. Involved in the assembly of an N-linked disaccharide that decorates the S-layer glycoprotein and flagellins. This Methanocaldococcus jannaschii (strain ATCC 43067 / DSM 2661 / JAL-1 / JCM 10045 / NBRC 100440) (Methanococcus jannaschii) protein is Dolichyl-phosphooligosaccharide-protein glycotransferase (aglB).